Consider the following 660-residue polypeptide: F-box/LRR-repeat protein 5 (660 aa).

The hemerythrin-like stretch occupies residues 1-157; the sequence is MAPFPDEVDL…IKKKVIAQHC (157 aa). Residues histidine 15, histidine 57, glutamate 58, glutamate 61, histidine 80, histidine 124, and glutamate 127 each contribute to the Fe(3+) site. The region spanning 200–246 is the F-box domain; it reads SASICNLPPEVMLNIFSYLNPQDLCRCSQVNTKWAQLARTGSLWRHL. Residues 283–305 form a disordered region; it reads YQEWDEDADIDESEETGEDDPSI. Over residues 285-303 the composition is skewed to acidic residues; sequence EWDEDADIDESEETGEDDP. LRR repeat units lie at residues 311-337, 338-362, 363-389, 390-417, 551-576, 577-604, 605-630, and 631-649; these read EKEL…VLAY, SSAT…LDLT, QTDI…DLSG, CEKI…RLLK, IRDI…SLSG, CHQI…NLSG, CLNV…HFYY, and CDNI…QNLQ. Positions 631, 645, 655, and 656 each coordinate [2Fe-2S] cluster.

In terms of assembly, part of a SCF (SKP1-cullin-F-box) protein ligase complex. Requires [2Fe-2S] cluster as cofactor. Post-translationally, ubiquitinated upon iron and oxygen depletion, leading to its degradation by the proteasome. Ubiquitination is regulated by the hemerythrin-like region that acts as an oxygen and iron sensor.

Its subcellular location is the cytoplasm. It is found in the perinuclear region. The protein localises to the nucleus. Its pathway is protein modification; protein ubiquitination. Functionally, component of some SCF (SKP1-cullin-F-box) protein ligase complex that plays a central role in iron homeostasis by promoting the ubiquitination and subsequent degradation of ireb2/irp2. Upon high iron and oxygen level, it specifically recognizes and binds ireb2/irp2, promoting its ubiquitination and degradation by the proteasome. The chain is F-box/LRR-repeat protein 5 (fbxl5) from Xenopus tropicalis (Western clawed frog).